Consider the following 273-residue polypeptide: Exosome complex component MTR3 (273 aa).

The segment at 1–36 (MPGDHRRIRGPEESQPPQLYAAEDDETPAARDPTRL) is disordered.

It belongs to the RNase PH family. As to quaternary structure, component of the RNA exosome core complex (Exo-9), composed of EXOSC1, EXOSC2, EXOSC3, EXOSC4, EXOSC5, EXOSC6, EXOSC7, EXOSC8 and EXOSC9; within the complex interacts with EXOSC1, EXOSC7 and EXOSC8. The catalytically inactive RNA exosome core complex (Exo-9) associates with the catalytic subunit EXOSC10/RRP6. Exo-9 may associate with DIS3 to form the nucleolar exosome complex, or DIS3L to form the cytoplasmic exosome complex. Exo-9 is formed by a hexameric base ring consisting of the heterodimers EXOSC4-EXOSC9, EXOSC5-EXOSC8 and EXOSC6-EXOSC7, and a cap ring consisting of EXOSC1, EXOSC2 and EXOSC3. The RNA exosome complex associates with cofactors EXOSC10/RRP6, C1D/RRP47, MPHOSPH6/MPP6 and MTREX/MTR4.

The protein resides in the cytoplasm. The protein localises to the nucleus. It localises to the nucleolus. Its function is as follows. Non-catalytic component of the RNA exosome complex which has 3'-&gt;5' exoribonuclease activity and participates in a multitude of cellular RNA processing and degradation events. In the nucleus, the RNA exosome complex is involved in proper maturation of stable RNA species such as rRNA, snRNA and snoRNA, in the elimination of RNA processing by-products and non-coding 'pervasive' transcripts, such as antisense RNA species and promoter-upstream transcripts (PROMPTs), and of mRNAs with processing defects, thereby limiting or excluding their export to the cytoplasm. The RNA exosome may be involved in Ig class switch recombination (CSR) and/or Ig variable region somatic hypermutation (SHM) by targeting AICDA deamination activity to transcribed dsDNA substrates. In the cytoplasm, the RNA exosome complex is involved in general mRNA turnover and specifically degrades inherently unstable mRNAs containing AU-rich elements (AREs) within their 3' untranslated regions, and in RNA surveillance pathways, preventing translation of aberrant mRNAs. It seems to be involved in degradation of histone mRNA. The catalytic inactive RNA exosome core complex of 9 subunits (Exo-9) is proposed to play a pivotal role in the binding and presentation of RNA for ribonucleolysis, and to serve as a scaffold for the association with catalytic subunits and accessory proteins or complexes. This chain is Exosome complex component MTR3 (Exosc6), found in Mus musculus (Mouse).